Reading from the N-terminus, the 227-residue chain is Apoptosis regulator OPG045 (227 aa).

Belongs to the orthopoxvirus OPG045 family. As to quaternary structure, homodimer. Interacts with host pro-apoptotic protein BCL2L11 (via BH3 domain). Interacts with host NLRP1. Interacts with host BAK.

It localises to the host mitochondrion outer membrane. It is found in the host cytoplasm. Functionally, plays a role in evading host innate immune response by inhibiting host inflammasome activation. Interacts with and inhibits NLR-mediated interleukin-1 beta/IL1B production in infected cells. At the host mitochondria outer membrane, interacts with the BH3 domain of host BAK and prevents BAK from binding active BAX. In turn, host apoptosis is inhibited. This Oryctolagus cuniculus (Rabbit) protein is Apoptosis regulator OPG045 (OPG045).